We begin with the raw amino-acid sequence, 910 residues long: MDTAEEDICRVCRSEGTPEKPLYHPCVCTGSIKFIHQECLVQWLKHSRKEYCELCKHRFAFTPIYSPDMPSRLPIQDIFAGLVTSIGTAIRYWFHYTLVAFAWLGVVPLTACRIYKCLFTGSVSSLLTLPLDMLSTENLLADCLQGCFVVTCTLCAFISLVWLREQIVHGGAPIWLEHAAPPFNAAGHHQNEAPAGGNGAENVAADQPANPPAENAVVGENPDAQDDQAEEEEEDNEEEDDAGVEDAADANNGAQDDMNWNALEWDRAAEELTWERMLGLDGSLVFLEHVFWVVSLNTLFILVFAFCPYHIGHFSLVGLGFEEHVQASHFEGLITTIVGYILLAITLIICHGLATLVKFHRSRRLLGVCYIVVKVSLLVVVEIGVFPLICGWWLDICSLEMFDATLKDRELSFQSAPGTTMFLHWLVGMVYVFYFASFILLLREVLRPGVLWFLRNLNDPDFNPVQEMIHLPIYRHLRRFILSVIVFGSIVLLMLWLPIRIIKSVLPNFLPYNVMLYSDAPVSELSLELLLLQVVLPALLEQGHTRQWLKGLVRAWTVTAGYLLDLHSYLLGDQEENENSANQQVNNNQHARNNNAIPVVGEGLHAAHQAILQQGGPVGFQPYRRPLNFPLRIFLLIVFMCITLLIASLICLTLPVFAGRWLMSFWTGTAKIHELYTAACGLYVCWLTIRAVTVMVAWMPQGRRVIFQKVKEWSLMIMKTLIVAVLLAGVVPLLLGLLFELVIVAPLRVPLDQTPLFYPWQDWALGVLHAKIIAAITLMGPQWWLKTVIEQVYANGIRNIDLHYIVRKLAAPVISVLLLSLCVPYVIASGVVPLLGVTAEMQNLVHRRIYPFLLMVVVLMAILSFQVRQFKRLYEHIKNDKYLVGQRLVNYERKSGKQGSSPPPPQSSQE.

Methionine 1 carries the post-translational modification N-acetylmethionine. The RING-CH-type zinc finger occupies 1–62 (MDTAEEDICR…ELCKHRFAFT (62 aa)). Residues 1–91 (MDTAEEDICR…LVTSIGTAIR (91 aa)) are Cytoplasmic-facing. Zn(2+) contacts are provided by cysteine 9, cysteine 12, cysteine 26, cysteine 28, histidine 36, cysteine 39, cysteine 52, and cysteine 55. The chain crosses the membrane as a helical span at residues 92 to 112 (YWFHYTLVAFAWLGVVPLTAC). Residues 113–142 (RIYKCLFTGSVSSLLTLPLDMLSTENLLAD) are Extracellular-facing. The chain crosses the membrane as a helical span at residues 143-163 (CLQGCFVVTCTLCAFISLVWL). Residues 164 to 283 (REQIVHGGAP…WERMLGLDGS (120 aa)) lie on the Cytoplasmic side of the membrane. The disordered stretch occupies residues 185-256 (AAGHHQNEAP…AADANNGAQD (72 aa)). A compositionally biased stretch (acidic residues) spans 223-248 (DAQDDQAEEEEEDNEEEDDAGVEDAA). A helical membrane pass occupies residues 284-304 (LVFLEHVFWVVSLNTLFILVF). Residues 305-336 (AFCPYHIGHFSLVGLGFEEHVQASHFEGLITT) lie on the Extracellular side of the membrane. Residues 337-357 (IVGYILLAITLIICHGLATLV) traverse the membrane as a helical segment. Residues 358–376 (KFHRSRRLLGVCYIVVKVS) lie on the Cytoplasmic side of the membrane. A helical transmembrane segment spans residues 377-397 (LLVVVEIGVFPLICGWWLDIC). Residues 398–421 (SLEMFDATLKDRELSFQSAPGTTM) lie on the Extracellular side of the membrane. Residues 422 to 442 (FLHWLVGMVYVFYFASFILLL) form a helical membrane-spanning segment. Residues 443–480 (REVLRPGVLWFLRNLNDPDFNPVQEMIHLPIYRHLRRF) are Cytoplasmic-facing. The helical transmembrane segment at 481–501 (ILSVIVFGSIVLLMLWLPIRI) threads the bilayer. Over 502–519 (IKSVLPNFLPYNVMLYSD) the chain is Extracellular. The helical transmembrane segment at 520–540 (APVSELSLELLLLQVVLPALL) threads the bilayer. Over 541–632 (EQGHTRQWLK…YRRPLNFPLR (92 aa)) the chain is Cytoplasmic. A helical membrane pass occupies residues 633 to 653 (IFLLIVFMCITLLIASLICLT). The Extracellular portion of the chain corresponds to 654 to 678 (LPVFAGRWLMSFWTGTAKIHELYTA). The helical transmembrane segment at 679–699 (ACGLYVCWLTIRAVTVMVAWM) threads the bilayer. Over 700–721 (PQGRRVIFQKVKEWSLMIMKTL) the chain is Cytoplasmic. The helical transmembrane segment at 722–742 (IVAVLLAGVVPLLLGLLFELV) threads the bilayer. Over 743–764 (IVAPLRVPLDQTPLFYPWQDWA) the chain is Extracellular. The helical transmembrane segment at 765–785 (LGVLHAKIIAAITLMGPQWWL) threads the bilayer. At 786-815 (KTVIEQVYANGIRNIDLHYIVRKLAAPVIS) the chain is on the cytoplasmic side. Residues 816–836 (VLLLSLCVPYVIASGVVPLLG) traverse the membrane as a helical segment. The Extracellular segment spans residues 837-848 (VTAEMQNLVHRR). A helical transmembrane segment spans residues 849-869 (IYPFLLMVVVLMAILSFQVRQ). Over 870–910 (FKRLYEHIKNDKYLVGQRLVNYERKSGKQGSSPPPPQSSQE) the chain is Cytoplasmic.

As to quaternary structure, interacts with DIO2. Interacts with SQLE. In terms of processing, auto-ubiquitinated, which results in proteasomal degradation. Deubiquitinated by USP19; protecting MARCHF6 from p97-mediated proteasomal degradation. In terms of tissue distribution, present in brain (at protein level).

The protein localises to the endoplasmic reticulum membrane. The enzyme catalyses S-ubiquitinyl-[E2 ubiquitin-conjugating enzyme]-L-cysteine + [acceptor protein]-L-lysine = [E2 ubiquitin-conjugating enzyme]-L-cysteine + N(6)-ubiquitinyl-[acceptor protein]-L-lysine.. It functions in the pathway protein modification; protein ubiquitination. Endoplasmic reticulum membrane-associated E3 ubiquitin ligase that plays a critical role in mitigating endoplasmic reticulum stress, the regulation of cholesterol and lipid homeostasis, and ferroptosis. Acts as a pivotal component of both the Ac/N-degron pathway (targeting the N-terminal acetyl group of substrates) and the ER-associated protein degradation-cytosol (ERAD-C) pathway (targeting misfolded substrates). For instance, mediates the degradation of Ac/N-degron-bearing proteins such as the G-protein regulator RGS2 and the lipid droplet protein PLIN2. Suppresses endoplasmic reticulum stress and ferroptosis through cytosolic POMC degradation. Prevents ferroptosis by acting as a NADPH sensor during lipid peroxidation through its C-terminal regulatory region. Facilitates also the degradation of selected endoplasmic reticulum proteins by associating with signal peptide peptidase for the turnover of endogenous tail-anchored proteins. Promotes ubiquitination of DIO2, leading to its degradation. By ubiquitinating and thereby modulating the stability of many proteins of the cholesterol pathway including SQLE, CYP51A1, CYP11A1 and HMGCR, acts as a crucial post-translational regulator of cholesterol synthesis. This Homo sapiens (Human) protein is E3 ubiquitin-protein ligase MARCHF6.